Reading from the N-terminus, the 86-residue chain is Antifungal protein 2 (86 aa).

Residues 1–21 (MHLSTALFSAIALLAATQVIG) form the signal peptide. Intrachain disulfides connect Cys-43-Cys-57, Cys-45-Cys-74, and Cys-49-Cys-83. Positions 44–54 (NCPNNCKHKKG) are lipid-binding. The Gamma-core motif lies at 72–83 (GKCEWQGGQLNC).

It is found in the secreted. Its function is as follows. Cysteine-rich antifungal protein highly effective against yeasts such as clinically relevant Candida species, including the multidrug-resistant pathogen Candida auris. Does not cause metabolic inactivity and apoptosis induction, but the fungal cell-killing activity is connected to its pore-forming ability in the cell membrane. NFAP2 has a low potential to trigger resistance in C.albicans in vitro, and the developed tolerance to NFAP2 is not associated with severe phenotypic changes compared with development of resistance to generic fluconazole. The protein is Antifungal protein 2 of Neosartorya fischeri (strain ATCC 1020 / DSM 3700 / CBS 544.65 / FGSC A1164 / JCM 1740 / NRRL 181 / WB 181) (Aspergillus fischerianus).